The chain runs to 270 residues: Interleukin-33 (270 aa).

A homeodomain-like HTH domain region spans residues 1–65; it reads MKPKMKYSTN…EACYFRRETT (65 aa). Positions 1 to 94 are excised as a propeptide; the sequence is MKPKMKYSTN…CQQQSTVECF (94 aa). Positions 64–111 are interaction with RELA; the sequence is TTKRPSLKTGRKHKRHLVLAACQQQSTVECFAFGISGVQKYTRALHDS.

Belongs to the IL-1 family. Highly divergent. As to quaternary structure, forms a 1:1:1 heterotrimeric complex with its primary high-affinity receptor IL1RL1 and the coreceptor IL1RAP. Interacts with cargo receptor TMED10; the interaction mediates the translocation from the cytoplasm into the ERGIC (endoplasmic reticulum-Golgi intermediate compartment) and thereby secretion. (Microbial infection) Interacts (in reduced form) with H.polygyrus ARI. The full-length protein can be released from cells and is able to signal via the IL1RL1/ST2 receptor. However, proteolytic processing by CELA1, CSTG/cathepsin G and ELANE/neutrophil elastase produces C-terminal peptides that are more active than the unprocessed full length protein. May also be proteolytically processed by calpains. Proteolytic cleavage mediated by apoptotic caspases including CASP3 and CASP7 results in IL33 inactivation. In vitro proteolytic cleavage by CASP1 was reported but could not be confirmed in vivo suggesting that IL33 is probably not a direct substrate for that caspase. In terms of tissue distribution, expressed at high level in high endothelial venules found in tonsils, Peyer patches and mesenteric lymph nodes. Almost undetectable in placenta.

It is found in the nucleus. Its subcellular location is the chromosome. The protein resides in the cytoplasm. It localises to the cytoplasmic vesicle. The protein localises to the secretory vesicle. It is found in the secreted. Cytokine that binds to and signals through the IL1RL1/ST2 receptor which in turn activates NF-kappa-B and MAPK signaling pathways in target cells. Involved in the maturation of Th2 cells inducing the secretion of T-helper type 2-associated cytokines. Also involved in activation of mast cells, basophils, eosinophils and natural killer cells. Acts as an enhancer of polarization of alternatively activated macrophages. Acts as a chemoattractant for Th2 cells, and may function as an 'alarmin', that amplifies immune responses during tissue injury. Induces rapid UCP2-dependent mitochondrial rewiring that attenuates the generation of reactive oxygen species and preserves the integrity of Krebs cycle required for persistent production of itaconate and subsequent GATA3-dependent differentiation of inflammation-resolving alternatively activated macrophages. Its function is as follows. In quiescent endothelia the uncleaved form is constitutively and abundantly expressed, and acts as a chromatin-associated nuclear factor with transcriptional repressor properties, it may sequester nuclear NF-kappaB/RELA, lowering expression of its targets. This form is rapidely lost upon angiogenic or pro-inflammatory activation. This chain is Interleukin-33, found in Homo sapiens (Human).